A 385-amino-acid polypeptide reads, in one-letter code: Meiosis-specific protein MEI4 (385 aa).

The interval 1–126 is interaction with REC114; sequence MDVQKWYLRT…LSQHFVESCT (126 aa). The tract at residues 86-110 is disordered; that stretch reads AQEPKSSESTLTSMEDSGCDLSNEQ. Residues 92–107 show a composition bias toward polar residues; it reads SESTLTSMEDSGCDLS.

This sequence belongs to the MEI4L family. Part of the MCD recombinosome complex, at least composed of IHO1, REC114 and MEI4. Forms a complex with REC114; the interaction is required for MEI4 stability. Interacts (via N-terminal domain) with REC114 (via C-terminal domain). Interacts with IHO1.

The protein resides in the chromosome. Its function is as follows. Required for DNA double-strand breaks (DSBs) formation in unsynapsed regions during meiotic recombination. Probably acts by forming a complex with IHO1 and REC114, which activates DSBs formation in unsynapsed regions, an essential step to ensure completion of synapsis. This Homo sapiens (Human) protein is Meiosis-specific protein MEI4.